Consider the following 317-residue polypeptide: MASAGAERRPGVQEATVVGQGQLTEEPGSAQTSECPVAGDQFLVPAHEARGTQSEDQRPAGAASESELQEEGPKLGEERPKPHAGALEERGPRPVVSIVRPRHGPKRKPVKSLSLPGLRAHLKAEAELPPKLPLQEEEPEDSQSEPSPSAKQHKKAKKRKSLGAPVLHAVASMVSAPLETLRLERKAQRLRPLYQYVNYCNPELNQAGKGDGEAEVEAEAELAPVPEEGGVEQLQALLPLAGELGPGLALPCPSPLVTPTHALAPLGEEAGEEPGGLPSLGVSDHKAEVDKSTQVDIDKMLSVCTAPLVPPLSPQYK.

Over residues 1–11 (MASAGAERRPG) the composition is skewed to basic and acidic residues. Positions 1-164 (MASAGAERRP…KAKKRKSLGA (164 aa)) are disordered. Polar residues predominate over residues 19 to 34 (GQGQLTEEPGSAQTSE). Basic and acidic residues-rich tracts occupy residues 47–58 (HEARGTQSEDQR) and 71–92 (EGPK…ERGP). 2 stretches are compositionally biased toward basic residues: residues 100–110 (RPRHGPKRKPV) and 151–161 (KQHKKAKKRKS).

This is an uncharacterized protein from Homo sapiens (Human).